We begin with the raw amino-acid sequence, 196 residues long: MSRTASITRTTSETSIELMLDLDGTGNTDIATGIGFFDHMLTALGRHAMLDLIVRAEGDLHIDAHHTVEDVGIVLGQAIREALGDKRGITRFGFAATPMDEALCEAAIDLSGRGFLVFDVPFERPMLGDMDTQLVQEFFQALTANGGFALHLTRRAGHNAHHVAEAAFKAAARALRMAVEPDPRAAGAIPSTKGVL.

The protein belongs to the imidazoleglycerol-phosphate dehydratase family.

Its subcellular location is the cytoplasm. The catalysed reaction is D-erythro-1-(imidazol-4-yl)glycerol 3-phosphate = 3-(imidazol-4-yl)-2-oxopropyl phosphate + H2O. The protein operates within amino-acid biosynthesis; L-histidine biosynthesis; L-histidine from 5-phospho-alpha-D-ribose 1-diphosphate: step 6/9. The sequence is that of Imidazoleglycerol-phosphate dehydratase from Acidiphilium cryptum (strain JF-5).